Reading from the N-terminus, the 251-residue chain is 3-deoxy-manno-octulosonate cytidylyltransferase (251 aa).

This sequence belongs to the KdsB family.

It localises to the cytoplasm. It catalyses the reaction 3-deoxy-alpha-D-manno-oct-2-ulosonate + CTP = CMP-3-deoxy-beta-D-manno-octulosonate + diphosphate. It participates in nucleotide-sugar biosynthesis; CMP-3-deoxy-D-manno-octulosonate biosynthesis; CMP-3-deoxy-D-manno-octulosonate from 3-deoxy-D-manno-octulosonate and CTP: step 1/1. Its pathway is bacterial outer membrane biogenesis; lipopolysaccharide biosynthesis. In terms of biological role, activates KDO (a required 8-carbon sugar) for incorporation into bacterial lipopolysaccharide in Gram-negative bacteria. The sequence is that of 3-deoxy-manno-octulosonate cytidylyltransferase from Brucella abortus (strain 2308).